Reading from the N-terminus, the 142-residue chain is Transcription antitermination protein NusB (142 aa).

Belongs to the NusB family.

Functionally, involved in transcription antitermination. Required for transcription of ribosomal RNA (rRNA) genes. Binds specifically to the boxA antiterminator sequence of the ribosomal RNA (rrn) operons. The chain is Transcription antitermination protein NusB from Streptococcus uberis (strain ATCC BAA-854 / 0140J).